Consider the following 250-residue polypeptide: Prolactin-7A2 (250 aa).

Residues 1–29 form the signal peptide; it reads MQLSFSRPRPWTLLLMVVSNLLLWENVSS. N-linked (GlcNAc...) asparagine glycosylation is found at Asn26, Asn35, Asn102, and Asn134. Intrachain disulfides connect Cys100-Cys215 and Cys232-Cys241.

This sequence belongs to the somatotropin/prolactin family. As to expression, expression restricted to placental tissues. Trophoblast giant cells are found to be the major source.

The protein resides in the secreted. The protein is Prolactin-7A2 (Prl7a2) of Rattus norvegicus (Rat).